The following is a 367-amino-acid chain: Popeye domain-containing protein 2 (367 aa).

Residue Asn4 is glycosylated (N-linked (GlcNAc...) asparagine). 2 helical membrane passes run 36 to 56 and 77 to 97; these read FLLMGFMAGSGVYGCFYLFGI and IVLWNVLLTVACLLQLAQLVY. Disordered regions lie at residues 273-292 and 312-367; these read PSASDGEPESEKDDEEALEA and APPA…TPEL. The segment covering 278 to 290 has biased composition (acidic residues); it reads GEPESEKDDEEAL. Over residues 344–356 the composition is skewed to polar residues; it reads PLQNSSQVMSRSQ. Asn347 carries N-linked (GlcNAc...) asparagine glycosylation. The residue at position 364 (Thr364) is a Phosphothreonine.

This sequence belongs to the popeye family. Expressed in the developing and adult heart, with high expression levels in the sinus and atrioventricular nodes. Also expressed in the bladder and skeletal muscle.

The protein resides in the membrane. Its subcellular location is the cell membrane. The protein localises to the sarcolemma. Important for the maintenance of cardiac function. Plays a regulatory function in heart rate dynamics mediated, at least in part, through cAMP-binding and, probably, by increasing cell surface expression of the potassium channel KCNK2 and enhancing current density. The protein is Popeye domain-containing protein 2 (Popdc2) of Mus musculus (Mouse).